A 466-amino-acid chain; its full sequence is Uronate isomerase (466 aa).

This sequence belongs to the metallo-dependent hydrolases superfamily. Uronate isomerase family.

The catalysed reaction is D-glucuronate = D-fructuronate. It carries out the reaction aldehydo-D-galacturonate = keto-D-tagaturonate. The protein operates within carbohydrate metabolism; pentose and glucuronate interconversion. This Lachnoclostridium phytofermentans (strain ATCC 700394 / DSM 18823 / ISDg) (Clostridium phytofermentans) protein is Uronate isomerase.